A 463-amino-acid polypeptide reads, in one-letter code: L-seryl-tRNA(Sec) selenium transferase (463 aa).

Lysine 295 is modified (N6-(pyridoxal phosphate)lysine).

Belongs to the SelA family. As to quaternary structure, homodecamer; pentamer of dimers. Binds only one seryl-tRNA(Sec) per dimer. It depends on pyridoxal 5'-phosphate as a cofactor.

It localises to the cytoplasm. It catalyses the reaction L-seryl-tRNA(Sec) + selenophosphate + H(+) = L-selenocysteinyl-tRNA(Sec) + phosphate. Its pathway is aminoacyl-tRNA biosynthesis; selenocysteinyl-tRNA(Sec) biosynthesis; selenocysteinyl-tRNA(Sec) from L-seryl-tRNA(Sec) (bacterial route): step 1/1. Converts seryl-tRNA(Sec) to selenocysteinyl-tRNA(Sec) required for selenoprotein biosynthesis. The sequence is that of L-seryl-tRNA(Sec) selenium transferase from Salmonella schwarzengrund (strain CVM19633).